The following is a 346-amino-acid chain: KH domain-containing, RNA-binding, signal transduction-associated protein 2 (346 aa).

One can recognise a KH domain in the interval 65 to 131; sequence LIPVQQYPKF…AKYAHLSNDL (67 aa). Positions 175–291 are disordered; it reads LSYLNGSDDP…SYESYDDNYS (117 aa). Low complexity predominate over residues 195 to 224; sequence LRLTSTASPRGRGSAAPPAPPGRGAAAPRG. Residues 268 to 287 are compositionally biased toward acidic residues; sequence YGYDDGYDGEYDDQSYESYD.

It belongs to the KHDRBS family.

It localises to the nucleus. RNA-binding protein that plays a role in the regulation of alternative splicing. In Danio rerio (Zebrafish), this protein is KH domain-containing, RNA-binding, signal transduction-associated protein 2 (khdrbs2).